Reading from the N-terminus, the 84-residue chain is Transcriptional regulator WhiB1 (84 aa).

The 63-residue stretch at 8-70 (VCRDEDPELF…GGMSEDERRA (63 aa)) folds into the 4Fe-4S Wbl-type domain. 4 residues coordinate [4Fe-4S] cluster: C9, C37, C40, and C46.

It belongs to the WhiB family. In terms of assembly, homodimer. [4Fe-4S] cluster serves as cofactor. In terms of processing, the Fe-S cluster can be nitrosylated by nitric oxide (NO). Upon Fe-S cluster removal intramolecular disulfide bonds are formed.

It is found in the cytoplasm. Its function is as follows. Acts as a transcriptional regulator. Probably redox-responsive. The apo- but not holo-form probably binds DNA. The protein is Transcriptional regulator WhiB1 (whiB1) of Mycobacterium tuberculosis (strain CDC 1551 / Oshkosh).